Here is a 190-residue protein sequence, read N- to C-terminus: Natural killer cells antigen CD94 (190 aa).

The Cytoplasmic segment spans residues Met1 to Arg10. A helical; Signal-anchor for type II membrane protein membrane pass occupies residues Leu11–Leu31. Topologically, residues Lys32 to Ile190 are extracellular. Disulfide bonds link Cys69-Cys81, Cys72-Cys83, Cys100-Cys185, and Cys163-Cys177. Residues Tyr79–Lys186 enclose the C-type lectin domain. N-linked (GlcNAc...) asparagine glycans are attached at residues Asn104 and Asn144.

In terms of assembly, can form disulfide-bonded heterodimer with NKG2 family members KLRC1 and KLRC2. KLRD1-KLRC1 heterodimer interacts with peptide-bound MHC-E-B2M heterotrimeric complex. KLRD1 plays a prominent role in directly interacting with MHC-E. KLRD1-KLRC1 interacts with much higher affinity with peptide-bound MHC-E-B2M than KLRD1-KLRC2. Interacts with the adapter protein TYROBP/DAP12; this interaction is required for cell surface expression and cell activation.

The protein resides in the cell membrane. Immune receptor involved in self-nonself discrimination. In complex with KLRC1 or KLRC2 on cytotoxic and regulatory lymphocyte subsets, recognizes non-classical major histocompatibility (MHC) class Ib molecule MHC-E loaded with self-peptides derived from the signal sequence of classical MHC class Ia and non-classical MHC class Ib molecules. Enables cytotoxic cells to monitor the expression of MHC class I molecules in healthy cells and to tolerate self. Primarily functions as a ligand binding subunit as it lacks the capacity to signal. In terms of biological role, KLRD1-KLRC1 acts as an immune inhibitory receptor. Key inhibitory receptor on natural killer (NK) cells that regulates their activation and effector functions. Dominantly counteracts T cell receptor signaling on a subset of memory/effector CD8-positive T cells as part of an antigen-driven response to avoid autoimmunity. On intraepithelial CD8-positive gamma-delta regulatory T cells triggers TGFB1 secretion, which in turn limits the cytotoxic programming of intraepithelial CD8-positive alpha-beta T cells, distinguishing harmless from pathogenic antigens. In MHC-E-rich tumor microenvironment, acts as an immune inhibitory checkpoint and may contribute to progressive loss of effector functions of NK cells and tumor-specific T cells, a state known as cell exhaustion. Upon MHC-E-peptide binding, transmits intracellular signals through KLRC1 immunoreceptor tyrosine-based inhibition motifs (ITIMs) by recruiting INPP5D/SHIP-1 and INPPL1/SHIP-2 tyrosine phosphatases to ITIMs, and ultimately opposing signals transmitted by activating receptors through dephosphorylation of proximal signaling molecules. Functionally, KLRD1-KLRC2 acts as an immune activating receptor. On cytotoxic lymphocyte subsets recognizes MHC-E loaded with signal sequence-derived peptides from non-classical MHC class Ib MHC-G molecules, likely playing a role in the generation and effector functions of adaptive NK cells and in maternal-fetal tolerance during pregnancy. Regulates the effector functions of terminally differentiated cytotoxic lymphocyte subsets, and in particular may play a role in adaptive NK cell response to viral infection. Upon MHC-E-peptide binding, transmits intracellular signals via the adapter protein TYROBP/DAP12, triggering the phosphorylation of proximal signaling molecules and cell activation. The chain is Natural killer cells antigen CD94 (KLRD1) from Bos taurus (Bovine).